A 448-amino-acid polypeptide reads, in one-letter code: tRNA modification GTPase MnmE (448 aa).

3 residues coordinate (6S)-5-formyl-5,6,7,8-tetrahydrofolate: arginine 25, glutamate 83, and lysine 122. Residues 218–372 (GFKVAIIGKP…LTQKLQKLLD (155 aa)) enclose the TrmE-type G domain. Residue asparagine 228 participates in K(+) binding. Residues 228–233 (NTGKSS), 247–253 (SDIAGTT), and 272–275 (DTAG) each bind GTP. Serine 232 contributes to the Mg(2+) binding site. Residues serine 247, isoleucine 249, and threonine 252 each coordinate K(+). Threonine 253 is a Mg(2+) binding site. Residue lysine 448 coordinates (6S)-5-formyl-5,6,7,8-tetrahydrofolate.

This sequence belongs to the TRAFAC class TrmE-Era-EngA-EngB-Septin-like GTPase superfamily. TrmE GTPase family. In terms of assembly, homodimer. Heterotetramer of two MnmE and two MnmG subunits. K(+) serves as cofactor.

Its subcellular location is the cytoplasm. In terms of biological role, exhibits a very high intrinsic GTPase hydrolysis rate. Involved in the addition of a carboxymethylaminomethyl (cmnm) group at the wobble position (U34) of certain tRNAs, forming tRNA-cmnm(5)s(2)U34. The polypeptide is tRNA modification GTPase MnmE (Nitratiruptor sp. (strain SB155-2)).